Here is a 208-residue protein sequence, read N- to C-terminus: uncharacterized protein (208 aa).

Disordered regions lie at residues 1 to 78 (MDLF…SPTE) and 154 to 208 (RRRS…PRNY). Basic residues predominate over residues 40–51 (KNHKKAQPRRTT). Over residues 179-197 (ANSSSPNPTATGSETSYGS) the composition is skewed to polar residues.

This is an uncharacterized protein from Caenorhabditis elegans.